The chain runs to 377 residues: Molybdenum import ATP-binding protein ModC (377 aa).

The ABC transporter domain occupies isoleucine 4–aspartate 240. Residue glycine 38–serine 45 participates in ATP binding. Residues arginine 299 to arginine 369 form the Mop domain.

The protein belongs to the ABC transporter superfamily. Molybdate importer (TC 3.A.1.8) family. The complex is composed of two ATP-binding proteins (ModC), two transmembrane proteins (ModB) and a solute-binding protein (ModA).

It is found in the cell inner membrane. The enzyme catalyses molybdate(out) + ATP + H2O = molybdate(in) + ADP + phosphate + H(+). Its function is as follows. Part of the ABC transporter complex ModABC involved in molybdenum import. Responsible for energy coupling to the transport system. The protein is Molybdenum import ATP-binding protein ModC of Rhodopseudomonas palustris (strain HaA2).